Consider the following 639-residue polypeptide: Eukaryotic translation initiation factor 2-alpha kinase 2 (639 aa).

The Protein kinase domain maps to 171–588 (FEEYSLLGRG…LEVLNCGLLL (418 aa)). Residues 177-185 (LGRGGFGSV) and Lys-200 contribute to the ATP site. The span at 298–320 (ISTSRKSSYSSTTESSNFENLES) shows a compositional bias: low complexity. Residues 298–322 (ISTSRKSSYSSTTESSNFENLESPR) form a disordered region. Asp-417 serves as the catalytic Proton acceptor.

It belongs to the protein kinase superfamily. Ser/Thr protein kinase family. GCN2 subfamily. Autophosphorylated.

The enzyme catalyses L-seryl-[protein] + ATP = O-phospho-L-seryl-[protein] + ADP + H(+). It catalyses the reaction L-threonyl-[protein] + ATP = O-phospho-L-threonyl-[protein] + ADP + H(+). Its function is as follows. Mediates down-regulation of protein synthesis in response to stress conditions by the phosphorylation of the alpha subunit of eIF-2 (tif211) on 'Ser-52'. Protein synthesis is inhibited at the level of initiation. Activity is inhibited in the presence of heme. The chain is Eukaryotic translation initiation factor 2-alpha kinase 2 (hri2) from Schizosaccharomyces pombe (strain 972 / ATCC 24843) (Fission yeast).